Reading from the N-terminus, the 85-residue chain is Small ribosomal subunit protein eS27 (85 aa).

A C4-type zinc finger spans residues 38-60 (CHGCRTITTVFSHAQNVVICSSC).

It belongs to the eukaryotic ribosomal protein eS27 family. Zn(2+) serves as cofactor.

This Dictyostelium discoideum (Social amoeba) protein is Small ribosomal subunit protein eS27 (rps27).